A 123-amino-acid chain; its full sequence is WAP four-disulfide core domain protein 5 (123 aa).

Positions 1–24 (MRIQSLLLLGALLAVGSQPPAAFG) are cleaved as a signal peptide. 2 WAP domains span residues 27–73 (KGEK…CVPR) and 74–121 (VSVK…RDPA). Intrachain disulfides connect cysteine 34–cysteine 62, cysteine 41–cysteine 66, cysteine 49–cysteine 61, cysteine 55–cysteine 70, cysteine 81–cysteine 109, cysteine 88–cysteine 113, cysteine 96–cysteine 108, and cysteine 102–cysteine 117.

Its subcellular location is the secreted. In terms of biological role, putative acid-stable proteinase inhibitor. The protein is WAP four-disulfide core domain protein 5 (WFDC5) of Saimiri boliviensis boliviensis (Bolivian squirrel monkey).